Consider the following 238-residue polypeptide: Probable transcriptional regulatory protein TC_0742 (238 aa).

The tract at residues 1-21 (MAGHSKWANTKHRKERADHKK) is disordered. Over residues 9–21 (NTKHRKERADHKK) the composition is skewed to basic residues.

The protein belongs to the TACO1 family.

It is found in the cytoplasm. In Chlamydia muridarum (strain MoPn / Nigg), this protein is Probable transcriptional regulatory protein TC_0742.